We begin with the raw amino-acid sequence, 260 residues long: Methyl-coenzyme M reductase I subunit gamma (260 aa).

Arg123 serves as a coordination point for coenzyme M.

The protein belongs to the methyl-coenzyme M reductase gamma subunit family. In terms of assembly, MCR is a hexamer of two alpha, two beta, and two gamma chains, forming a dimer of heterotrimers. Coenzyme F430 serves as cofactor.

It localises to the cytoplasm. The enzyme catalyses coenzyme B + methyl-coenzyme M = methane + coenzyme M-coenzyme B heterodisulfide. The protein operates within one-carbon metabolism; methyl-coenzyme M reduction; methane from methyl-coenzyme M: step 1/1. Functionally, component of the methyl-coenzyme M reductase (MCR) I that catalyzes the reductive cleavage of methyl-coenzyme M (CoM-S-CH3 or 2-(methylthio)ethanesulfonate) using coenzyme B (CoB or 7-mercaptoheptanoylthreonine phosphate) as reductant which results in the production of methane and the mixed heterodisulfide of CoB and CoM (CoM-S-S-CoB). This is the final step in methanogenesis. The chain is Methyl-coenzyme M reductase I subunit gamma (mcrG) from Methanocaldococcus jannaschii (strain ATCC 43067 / DSM 2661 / JAL-1 / JCM 10045 / NBRC 100440) (Methanococcus jannaschii).